The primary structure comprises 137 residues: Insulin-like peptide 2 (137 aa).

The first 26 residues, 1-26, serve as a signal peptide directing secretion; the sequence is MSKPLSFISMVAVILLASSTVKLAQG. 3 cysteine pairs are disulfide-bonded: Cys-29–Cys-119, Cys-41–Cys-132, and Cys-118–Cys-123. The propeptide at 53 to 104 is connecting peptide; it reads AMPGADSDLDALNPLQFVQEFEEEDNSISEPLRSALFPGSYLGGVLNSLAEV.

This sequence belongs to the insulin family. In terms of assembly, heterodimer of a B chain and an A chain linked by two disulfide bonds. As to expression, broadly expressed at a low level in the embryonic mesoderm, beginning at stage 12. Expressed at a high level in the embryonic anterior midgut, with expression diminishing at late stage 16. Expressed at a low level in larval imaginal disks. Expressed at a high level in larval salivary glands and in seven cells of each larval brain hemisphere that may correspond to neurosecretory cells.

It is found in the secreted. In terms of biological role, possible ligand of InR/insulin-like receptor. Plays a role in regulating body size by increasing cell size and cell number of individual organs. Probably mediates its growth effects by acting as a ligand for the insulin receptor and transducing a signal via the Chico/PI3K/Akt(PKB) pathway. In Drosophila melanogaster (Fruit fly), this protein is Insulin-like peptide 2.